A 288-amino-acid polypeptide reads, in one-letter code: Rhox homeobox family member 2B (288 aa).

The tract at residues 16 to 136 (SPAVDDEKEL…GLEPGNAQQP (121 aa)) is disordered. Acidic residues predominate over residues 39-48 (VKEEEEDAQP). A compositionally biased stretch (basic and acidic residues) spans 68 to 80 (GEEKDGGGEEKDG). A DNA-binding region (homeobox) is located at residues 134–193 (QQPNVHAFTPLQLQELECIFQREQFPSEFLRRRLARSMNVTELAVQIWFENRRAKWRRHQ). The short motif at 186 to 195 (RAKWRRHQRA) is the Nuclear localization signal element.

It belongs to the paired-like homeobox family. PEPP subfamily. Expressed in testis, mainly expressed in germ cells, but also detected in somatic cells such as Sertoli cells, Leydig cells and peritubular cells.

It localises to the nucleus. Functionally, transcription factor maybe involved in reproductive processes. Modulates expression of target genes encoding proteins involved in processes relevant to spermatogenesis. The sequence is that of Rhox homeobox family member 2B from Homo sapiens (Human).